Here is a 72-residue protein sequence, read N- to C-terminus: Translation initiation factor IF-1 (72 aa).

Residues 1 to 72 (MAKEEAIEIE…TKGRITYRYK (72 aa)) form the S1-like domain.

Belongs to the IF-1 family. As to quaternary structure, component of the 30S ribosomal translation pre-initiation complex which assembles on the 30S ribosome in the order IF-2 and IF-3, IF-1 and N-formylmethionyl-tRNA(fMet); mRNA recruitment can occur at any time during PIC assembly.

Its subcellular location is the cytoplasm. In terms of biological role, one of the essential components for the initiation of protein synthesis. Stabilizes the binding of IF-2 and IF-3 on the 30S subunit to which N-formylmethionyl-tRNA(fMet) subsequently binds. Helps modulate mRNA selection, yielding the 30S pre-initiation complex (PIC). Upon addition of the 50S ribosomal subunit IF-1, IF-2 and IF-3 are released leaving the mature 70S translation initiation complex. This Chlorobium phaeobacteroides (strain DSM 266 / SMG 266 / 2430) protein is Translation initiation factor IF-1.